Here is a 78-residue protein sequence, read N- to C-terminus: Large ribosomal subunit protein uL10 (78 aa).

Positions 40–50 (AAAAAATAPAA) are enriched in low complexity. The disordered stretch occupies residues 40 to 78 (AAAAAATAPAAETKKEEKKEEKKEETEESDDDIGLSLFH). A compositionally biased stretch (basic and acidic residues) spans 51–64 (ETKKEEKKEEKKEE).

Belongs to the universal ribosomal protein uL10 family. In terms of assembly, P0 forms a pentameric complex by interaction with dimers of P1 and P2.

It localises to the nucleus. The protein localises to the cytoplasm. Ribosomal protein P0 is the functional equivalent of E.coli protein L10. The polypeptide is Large ribosomal subunit protein uL10 (Culicoides nubeculosus (Biting midge)).